The primary structure comprises 69 residues: MILYPSVDDLLERVDSRYSLIMLASKRAHQLDEGQPELLDKYTSQKNVGKALEEVVAGDVIIDPNEKDL.

This sequence belongs to the RNA polymerase subunit omega family. In terms of assembly, the RNAP catalytic core consists of 2 alpha, 1 beta, 1 beta' and 1 omega subunit. When a sigma factor is associated with the core the holoenzyme is formed, which can initiate transcription.

It catalyses the reaction RNA(n) + a ribonucleoside 5'-triphosphate = RNA(n+1) + diphosphate. Its function is as follows. Promotes RNA polymerase assembly. Latches the N- and C-terminal regions of the beta' subunit thereby facilitating its interaction with the beta and alpha subunits. The sequence is that of DNA-directed RNA polymerase subunit omega from Pediococcus pentosaceus (strain ATCC 25745 / CCUG 21536 / LMG 10740 / 183-1w).